The chain runs to 129 residues: Ribosome-binding factor A (129 aa).

Belongs to the RbfA family. In terms of assembly, monomer. Binds 30S ribosomal subunits, but not 50S ribosomal subunits or 70S ribosomes.

Its subcellular location is the cytoplasm. One of several proteins that assist in the late maturation steps of the functional core of the 30S ribosomal subunit. Associates with free 30S ribosomal subunits (but not with 30S subunits that are part of 70S ribosomes or polysomes). Required for efficient processing of 16S rRNA. May interact with the 5'-terminal helix region of 16S rRNA. The chain is Ribosome-binding factor A from Thioalkalivibrio sulfidiphilus (strain HL-EbGR7).